Reading from the N-terminus, the 78-residue chain is Large ribosomal subunit protein bL28 (78 aa).

It belongs to the bacterial ribosomal protein bL28 family.

The chain is Large ribosomal subunit protein bL28 from Methylobacillus flagellatus (strain ATCC 51484 / DSM 6875 / VKM B-1610 / KT).